The primary structure comprises 151 residues: UPF0208 membrane protein Ent638_2839 (151 aa).

The next 2 helical transmembrane spans lie at 46–65 (YAIR…QIAL) and 69–91 (LGPA…WWLG).

Belongs to the UPF0208 family.

It localises to the cell inner membrane. This Enterobacter sp. (strain 638) protein is UPF0208 membrane protein Ent638_2839.